Reading from the N-terminus, the 235-residue chain is 2-C-methyl-D-erythritol 4-phosphate cytidylyltransferase (235 aa).

The protein belongs to the IspD/TarI cytidylyltransferase family. IspD subfamily.

The catalysed reaction is 2-C-methyl-D-erythritol 4-phosphate + CTP + H(+) = 4-CDP-2-C-methyl-D-erythritol + diphosphate. The protein operates within isoprenoid biosynthesis; isopentenyl diphosphate biosynthesis via DXP pathway; isopentenyl diphosphate from 1-deoxy-D-xylulose 5-phosphate: step 2/6. In terms of biological role, catalyzes the formation of 4-diphosphocytidyl-2-C-methyl-D-erythritol from CTP and 2-C-methyl-D-erythritol 4-phosphate (MEP). In Pseudomonas putida (strain W619), this protein is 2-C-methyl-D-erythritol 4-phosphate cytidylyltransferase.